The following is a 151-amino-acid chain: Globin-2 B chain (151 aa).

An N-acetylserine modification is found at Ser1. In terms of domain architecture, Globin spans 11–151 (VSNADQKDLL…SLVAVVQASL (141 aa)). A heme b-binding site is contributed by His103.

The protein belongs to the globin family. As to quaternary structure, heterotetramer of two alpha chains and two beta chains.

The protein is Globin-2 B chain of Anadara inaequivalvis (Inequivalve ark).